Reading from the N-terminus, the 331-residue chain is 6-phosphogluconolactonase (331 aa).

The protein belongs to the cycloisomerase 2 family.

The enzyme catalyses 6-phospho-D-glucono-1,5-lactone + H2O = 6-phospho-D-gluconate + H(+). It participates in carbohydrate degradation; pentose phosphate pathway; D-ribulose 5-phosphate from D-glucose 6-phosphate (oxidative stage): step 2/3. Functionally, catalyzes the hydrolysis of 6-phosphogluconolactone to 6-phosphogluconate. This Salmonella typhi protein is 6-phosphogluconolactonase.